Here is a 212-residue protein sequence, read N- to C-terminus: Redox-sensing transcriptional repressor Rex (212 aa).

Residues 18–57 (LYYRFVNTLKSKGIDRVNSKAISEALNIESATIRRDFSYF) constitute a DNA-binding region (H-T-H motif). 92-97 (GVGNLG) is an NAD(+) binding site.

The protein belongs to the transcriptional regulatory Rex family. Homodimer.

The protein resides in the cytoplasm. Functionally, modulates transcription in response to changes in cellular NADH/NAD(+) redox state. This is Redox-sensing transcriptional repressor Rex from Staphylococcus haemolyticus (strain JCSC1435).